The following is a 297-amino-acid chain: Acetyl-coenzyme A carboxylase carboxyl transferase subunit beta (297 aa).

The region spanning 25–294 is the CoA carboxyltransferase N-terminal domain; it reads LWVKCPETGQ…LPPKGRLPRP (270 aa).

Belongs to the AccD/PCCB family. As to quaternary structure, acetyl-CoA carboxylase is a heterohexamer composed of biotin carboxyl carrier protein (AccB), biotin carboxylase (AccC) and two subunits each of ACCase subunit alpha (AccA) and ACCase subunit beta (AccD).

Its subcellular location is the cytoplasm. It catalyses the reaction N(6)-carboxybiotinyl-L-lysyl-[protein] + acetyl-CoA = N(6)-biotinyl-L-lysyl-[protein] + malonyl-CoA. It functions in the pathway lipid metabolism; malonyl-CoA biosynthesis; malonyl-CoA from acetyl-CoA: step 1/1. In terms of biological role, component of the acetyl coenzyme A carboxylase (ACC) complex. Biotin carboxylase (BC) catalyzes the carboxylation of biotin on its carrier protein (BCCP) and then the CO(2) group is transferred by the transcarboxylase to acetyl-CoA to form malonyl-CoA. This is Acetyl-coenzyme A carboxylase carboxyl transferase subunit beta from Xanthobacter autotrophicus (strain ATCC BAA-1158 / Py2).